Reading from the N-terminus, the 227-residue chain is Cytochrome c oxidase subunit 2 (227 aa).

Topologically, residues 1–14 are mitochondrial intermembrane; it reads MAYPFQLGLQDATS. Residues 15–45 form a helical membrane-spanning segment; it reads PIMEELLHFHDHTLMIVFLISSLVLYIITLM. Topologically, residues 46–59 are mitochondrial matrix; sequence LTTKLTHTSTMDAQ. A helical transmembrane segment spans residues 60–87; sequence EVETVWTILPAIILILIALPSLRILYMM. Topologically, residues 88–227 are mitochondrial intermembrane; the sequence is DEINNPSLTV…YFETWSAVMV (140 aa). The Cu cation site is built by His161, Cys196, Glu198, Cys200, His204, and Met207. Position 198 (Glu198) interacts with Mg(2+). Tyr218 carries the post-translational modification Phosphotyrosine.

Belongs to the cytochrome c oxidase subunit 2 family. Component of the cytochrome c oxidase (complex IV, CIV), a multisubunit enzyme composed of 14 subunits. The complex is composed of a catalytic core of 3 subunits MT-CO1, MT-CO2 and MT-CO3, encoded in the mitochondrial DNA, and 11 supernumerary subunits COX4I, COX5A, COX5B, COX6A, COX6B, COX6C, COX7A, COX7B, COX7C, COX8 and NDUFA4, which are encoded in the nuclear genome. The complex exists as a monomer or a dimer and forms supercomplexes (SCs) in the inner mitochondrial membrane with NADH-ubiquinone oxidoreductase (complex I, CI) and ubiquinol-cytochrome c oxidoreductase (cytochrome b-c1 complex, complex III, CIII), resulting in different assemblies (supercomplex SCI(1)III(2)IV(1) and megacomplex MCI(2)III(2)IV(2)). Found in a complex with TMEM177, COA6, COX18, COX20, SCO1 and SCO2. Interacts with TMEM177 in a COX20-dependent manner. Interacts with COX20. Interacts with COX16. It depends on Cu cation as a cofactor.

It is found in the mitochondrion inner membrane. It carries out the reaction 4 Fe(II)-[cytochrome c] + O2 + 8 H(+)(in) = 4 Fe(III)-[cytochrome c] + 2 H2O + 4 H(+)(out). In terms of biological role, component of the cytochrome c oxidase, the last enzyme in the mitochondrial electron transport chain which drives oxidative phosphorylation. The respiratory chain contains 3 multisubunit complexes succinate dehydrogenase (complex II, CII), ubiquinol-cytochrome c oxidoreductase (cytochrome b-c1 complex, complex III, CIII) and cytochrome c oxidase (complex IV, CIV), that cooperate to transfer electrons derived from NADH and succinate to molecular oxygen, creating an electrochemical gradient over the inner membrane that drives transmembrane transport and the ATP synthase. Cytochrome c oxidase is the component of the respiratory chain that catalyzes the reduction of oxygen to water. Electrons originating from reduced cytochrome c in the intermembrane space (IMS) are transferred via the dinuclear copper A center (CU(A)) of subunit 2 and heme A of subunit 1 to the active site in subunit 1, a binuclear center (BNC) formed by heme A3 and copper B (CU(B)). The BNC reduces molecular oxygen to 2 water molecules using 4 electrons from cytochrome c in the IMS and 4 protons from the mitochondrial matrix. This chain is Cytochrome c oxidase subunit 2 (MT-CO2), found in Vulpes vulpes (Red fox).